A 682-amino-acid chain; its full sequence is Inactive protein-arginine deiminase type-6 (682 aa).

Serine 2 and serine 434 each carry phosphoserine.

It belongs to the protein arginine deiminase family. As to quaternary structure, homodimers. Associates with alpha-tubulin. In terms of processing, phosphorylation at Ser-2, possibly by RSK-type kinases, and Ser-434 creates binding sites for 14-3-3 proteins. Expressed at very high levels in oocytes. Weakly expressed in testis. Expressed in primordial, primary, secondary and Graafian follicles, and in immature oocytes, mature eggs and blastocyst (at protein level).

Its subcellular location is the cytoplasm. It localises to the nucleus. The protein localises to the cytoplasmic vesicle. It is found in the secretory vesicle. The protein resides in the cortical granule. Functionally, structural constituent of cytoplasmic lattices, which plays a key role in early embryonic development. Cytoplasmic lattices consist in fibrous structures found in the cytoplasm of oocytes and preimplantation embryos. They are required to store maternal proteins critical for embryonic development, such as ribosomal proteins and proteins that control epigenetic reprogramming of the preimplantation embryo, and prevent their degradation or activation. In contrast to other members of the family, does not show protein-arginine deiminase activity due to its inability to bind Ca(2+). The protein is Inactive protein-arginine deiminase type-6 of Mus musculus (Mouse).